The primary structure comprises 325 residues: Serpentine receptor class delta-59 (325 aa).

The next 8 membrane-spanning stretches (helical) occupy residues tryptophan 14–isoleucine 34, leucine 45–leucine 65, isoleucine 75–isoleucine 95, tyrosine 97–phenylalanine 117, threonine 132–threonine 152, phenylalanine 190–isoleucine 210, threonine 235–phenylalanine 255, and isoleucine 275–valine 295.

Belongs to the nematode receptor-like protein srd family.

Its subcellular location is the membrane. This is Serpentine receptor class delta-59 (srd-59) from Caenorhabditis elegans.